Reading from the N-terminus, the 343-residue chain is N-acetyl-gamma-glutamyl-phosphate reductase (343 aa).

Cysteine 147 is a catalytic residue.

The protein belongs to the NAGSA dehydrogenase family. Type 1 subfamily.

The protein resides in the cytoplasm. The enzyme catalyses N-acetyl-L-glutamate 5-semialdehyde + phosphate + NADP(+) = N-acetyl-L-glutamyl 5-phosphate + NADPH + H(+). The protein operates within amino-acid biosynthesis; L-arginine biosynthesis; N(2)-acetyl-L-ornithine from L-glutamate: step 3/4. In terms of biological role, catalyzes the NADPH-dependent reduction of N-acetyl-5-glutamyl phosphate to yield N-acetyl-L-glutamate 5-semialdehyde. This chain is N-acetyl-gamma-glutamyl-phosphate reductase, found in Listeria welshimeri serovar 6b (strain ATCC 35897 / DSM 20650 / CCUG 15529 / CIP 8149 / NCTC 11857 / SLCC 5334 / V8).